The chain runs to 223 residues: Phosphoribosylformylglycinamidine synthase subunit PurQ (223 aa).

Residues 3–223 (FAVLVFPGSN…MVKSWREQHV (221 aa)) enclose the Glutamine amidotransferase type-1 domain. C85 acts as the Nucleophile in catalysis. Residues H193 and E195 contribute to the active site.

Part of the FGAM synthase complex composed of 1 PurL, 1 PurQ and 2 PurS subunits.

Its subcellular location is the cytoplasm. It carries out the reaction N(2)-formyl-N(1)-(5-phospho-beta-D-ribosyl)glycinamide + L-glutamine + ATP + H2O = 2-formamido-N(1)-(5-O-phospho-beta-D-ribosyl)acetamidine + L-glutamate + ADP + phosphate + H(+). The catalysed reaction is L-glutamine + H2O = L-glutamate + NH4(+). Its pathway is purine metabolism; IMP biosynthesis via de novo pathway; 5-amino-1-(5-phospho-D-ribosyl)imidazole from N(2)-formyl-N(1)-(5-phospho-D-ribosyl)glycinamide: step 1/2. Functionally, part of the phosphoribosylformylglycinamidine synthase complex involved in the purines biosynthetic pathway. Catalyzes the ATP-dependent conversion of formylglycinamide ribonucleotide (FGAR) and glutamine to yield formylglycinamidine ribonucleotide (FGAM) and glutamate. The FGAM synthase complex is composed of three subunits. PurQ produces an ammonia molecule by converting glutamine to glutamate. PurL transfers the ammonia molecule to FGAR to form FGAM in an ATP-dependent manner. PurS interacts with PurQ and PurL and is thought to assist in the transfer of the ammonia molecule from PurQ to PurL. The protein is Phosphoribosylformylglycinamidine synthase subunit PurQ of Staphylococcus aureus (strain MRSA252).